A 289-amino-acid polypeptide reads, in one-letter code: Zinc finger matrin-type protein 3 (289 aa).

Residues 1–59 are disordered; the sequence is MILLQHAGLPPPKRPSSSPPMSVAARSTGALQLPPQKPFGQEASLPLAGEEEPPKGGEQ. Residues 9–18 show a composition bias toward pro residues; that stretch reads LPPPKRPSSS. 2 Matrin-type zinc fingers span residues 70-100 and 147-177; these read LYCKLCNVTLNSAQQAQAHYQGKNHGKKLRN and DYCKLCDASFSSPAVAQAHYQGKNHAKRLRL. The span at 180-191 shows a compositional bias: polar residues; it reads AQSNSFSDSSEV. The interval 180–200 is disordered; that stretch reads AQSNSFSDSSEVGQRRTRKEG. The Matrin-type 3 zinc finger occupies 246 to 276; the sequence is FYCSMCNVGAGEEVEFRQHLESKQHKSKVSE.

As to quaternary structure, interacts with dsRNA.

The protein localises to the nucleus. It is found in the nucleolus. Functionally, acts as a bona fide target gene of p53/TP53. May play a role in the TP53-dependent growth regulatory pathway. May contribute to TP53-mediated apoptosis by regulation of TP53 expression and translocation to the nucleus and nucleolus. This Bos taurus (Bovine) protein is Zinc finger matrin-type protein 3.